The sequence spans 135 residues: MKNSSKIFVVLSIILFYVISSCHGYNPFAKTVVTVTNNISPQTTLTISCRSKDDDLGEHLLLHGQAFLWKFRPSWFRTTLFTCKFLWNNNVKWFDTYRSDRDQGHCYSCNWSINADSACISGNFNKKFDRCYPWN.

Residues 1-24 (MKNSSKIFVVLSIILFYVISSCHG) form the signal peptide. N-linked (GlcNAc...) asparagine glycosylation occurs at N110.

It belongs to the plant self-incompatibility (S1) protein family.

The protein localises to the secreted. The polypeptide is S-protein homolog 29 (Arabidopsis thaliana (Mouse-ear cress)).